We begin with the raw amino-acid sequence, 412 residues long: Nuclear hormone receptor family member nhr-61 (412 aa).

Residues 1 to 19 show a composition bias toward low complexity; the sequence is MIVDSISSSTASTSSSSPT. The disordered stretch occupies residues 1-23; that stretch reads MIVDSISSSTASTSSSSPTRGTP. A DNA-binding region (nuclear receptor) is located at residues 27 to 102; the sequence is SLQCAVCGDV…VGMNPRAVQG (76 aa). 2 consecutive NR C4-type zinc fingers follow at residues 30-50 and 66-90; these read CAVC…CNGC and CRHG…LTRC. In terms of domain architecture, NR LBD spans 144–407; sequence KKEQIIDNLR…DWSQELRDHR (264 aa).

This sequence belongs to the nuclear hormone receptor family.

The protein localises to the nucleus. Functionally, orphan nuclear receptor. This Caenorhabditis elegans protein is Nuclear hormone receptor family member nhr-61 (nhr-61).